The following is a 356-amino-acid chain: MSRYWSDIVRQLEPYVPGEQPALAHPVKLNTNENPYPPSPRALDAIRRELGDTGEALRRYPDPVARRLRETVAAYHGIAPEQVFAGNGSDEVLAHAFQALLQHDRPLRFPDITYSFYPTYARLYRVAYETVPLADDFSIVVDDYLDDAGCVLFPNPNAPTGRALPLADIERIVAANPSSVVVIDEAYVDFGAESAVSLIARYPNLLVVHTVSKARSLAGMRVGFAFGDAALIDALTRVKDSFNSYPLDRLAQVATQASYEDEAWFQATRKQVIASRERLVGALAALGFDVVPSAANFVFARPRSHDAATLAAQLKQREIFVRHFKLPRIDQHLRITVGSDAECDALVAALRELLAA.

N6-(pyridoxal phosphate)lysine is present on Lys-213.

Belongs to the class-II pyridoxal-phosphate-dependent aminotransferase family. Histidinol-phosphate aminotransferase subfamily. Homodimer. The cofactor is pyridoxal 5'-phosphate.

It catalyses the reaction L-histidinol phosphate + 2-oxoglutarate = 3-(imidazol-4-yl)-2-oxopropyl phosphate + L-glutamate. The protein operates within amino-acid biosynthesis; L-histidine biosynthesis; L-histidine from 5-phospho-alpha-D-ribose 1-diphosphate: step 7/9. This chain is Histidinol-phosphate aminotransferase 1, found in Burkholderia pseudomallei (strain K96243).